Here is a 166-residue protein sequence, read N- to C-terminus: MNIRQQLTQFLSLAYVFTSAFVIWKSLGIITNSHSPIVVVLSGSMEPAFQRGDILFLWNRDQEAKVGDIVVYEIQGRNIPIVHRVLREHHNSDKQLLLTKGDNNAVDDLGLYAKKQKYLNQKTDLVGSVKAYLPKLGYVTILITENVYFKYGMLGLMCISTLLTNE.

Residues 1 to 9 (MNIRQQLTQ) are Cytoplasmic-facing. Residues 10–30 (FLSLAYVFTSAFVIWKSLGII) form a helical; Signal-anchor for type II membrane protein membrane-spanning segment. Over 31-166 (TNSHSPIVVV…MCISTLLTNE (136 aa)) the chain is Lumenal. Active-site charge relay system residues include serine 44, histidine 83, and aspartate 108. Residues 152–163 (GMLGLMCISTLL) form a C-terminal short (CTS) helix region.

Belongs to the peptidase S26B family. As to quaternary structure, component of the signal peptidase complex (SPC) composed of a catalytic subunit SEC11 and three accessory subunits SPC1, SPC2 and SPC3. The complex induces a local thinning of the ER membrane which is used to measure the length of the signal peptide (SP) h-region of protein substrates. This ensures the selectivity of the complex towards h-regions shorter than 18-20 amino acids. SPC associates with the translocon complex.

Its subcellular location is the endoplasmic reticulum membrane. The enzyme catalyses Cleavage of hydrophobic, N-terminal signal or leader sequences from secreted and periplasmic proteins.. Catalytic component of the signal peptidase complex (SPC) which catalyzes the cleavage of N-terminal signal sequences from nascent proteins as they are translocated into the lumen of the endoplasmic reticulum. Specifically cleaves N-terminal signal peptides that contain a hydrophobic alpha-helix (h-region) shorter than 18-20 amino acids. The chain is Signal peptidase complex catalytic subunit SEC11 (SEC11) from Scheffersomyces stipitis (strain ATCC 58785 / CBS 6054 / NBRC 10063 / NRRL Y-11545) (Yeast).